Consider the following 103-residue polypeptide: c-Myc-binding protein (103 aa).

The protein belongs to the AMY1 family. As to quaternary structure, binds via its C-terminal region to the N-terminal region of MYC. Associates with AKAP1/S-AKAP84. Interacts with MYCBPAP. Interacts with CFAP91.

The protein localises to the cytoplasm. It is found in the nucleus. May control the transcriptional activity of MYC. Stimulates the activation of E box-dependent transcription by MYC. The polypeptide is c-Myc-binding protein (MYCBP) (Bos taurus (Bovine)).